Consider the following 303-residue polypeptide: D-alanine--D-alanine ligase (303 aa).

Residues 103-293 (KTLFIKGGIP…FAQLCEKILE (191 aa)) form the ATP-grasp domain. 130-179 (PYVIKPSRQGSSIGIEFVYDIKELDQAIKKSTQYDHVVLAEALITGKELT) lines the ATP pocket. Mg(2+)-binding residues include Asp-247, Glu-260, and Asn-262.

It belongs to the D-alanine--D-alanine ligase family. It depends on Mg(2+) as a cofactor. Mn(2+) is required as a cofactor.

It localises to the cytoplasm. It carries out the reaction 2 D-alanine + ATP = D-alanyl-D-alanine + ADP + phosphate + H(+). It participates in cell wall biogenesis; peptidoglycan biosynthesis. Its function is as follows. Cell wall formation. In Methylacidiphilum infernorum (isolate V4) (Methylokorus infernorum (strain V4)), this protein is D-alanine--D-alanine ligase.